Consider the following 89-residue polypeptide: Small ribosomal subunit protein uS14A (89 aa).

This sequence belongs to the universal ribosomal protein uS14 family. As to quaternary structure, part of the 30S ribosomal subunit. Contacts proteins S3 and S10.

Binds 16S rRNA, required for the assembly of 30S particles and may also be responsible for determining the conformation of the 16S rRNA at the A site. This chain is Small ribosomal subunit protein uS14A, found in Limosilactobacillus reuteri (strain DSM 20016) (Lactobacillus reuteri).